A 340-amino-acid chain; its full sequence is Hydroxyurea phosphotransferase (340 aa).

The active-site Proton acceptor is the Asp-240.

It belongs to the aminoglycoside phosphotransferase family.

Its function is as follows. Potential phosphotransferase that inactivates hydroxyurea by phosphorylation of the hydroxy group in the hydroxylamine moiety. The sequence is that of Hydroxyurea phosphotransferase (hur) from Kitasatospora aureofaciens (Streptomyces aureofaciens).